A 497-amino-acid chain; its full sequence is 3-octaprenyl-4-hydroxybenzoate carboxy-lyase (497 aa).

Position 175 (Asn175) interacts with Mn(2+). Prenylated FMN is bound by residues 178–180 (IYR), 192–194 (RWL), and 197–198 (RG). Glu241 serves as a coordination point for Mn(2+). Residue Asp290 is the Proton donor of the active site.

It belongs to the UbiD family. In terms of assembly, homohexamer. The cofactor is prenylated FMN. Mn(2+) serves as cofactor.

It is found in the cell membrane. It catalyses the reaction a 4-hydroxy-3-(all-trans-polyprenyl)benzoate + H(+) = a 2-(all-trans-polyprenyl)phenol + CO2. Its pathway is cofactor biosynthesis; ubiquinone biosynthesis. Catalyzes the decarboxylation of 3-octaprenyl-4-hydroxy benzoate to 2-octaprenylphenol, an intermediate step in ubiquinone biosynthesis. This Shigella dysenteriae serotype 1 (strain Sd197) protein is 3-octaprenyl-4-hydroxybenzoate carboxy-lyase.